A 314-amino-acid polypeptide reads, in one-letter code: Peroxidase 2 (314 aa).

The signal sequence occupies residues 1–23 (MASASSVSLMLLVAAAMASAASA). Gln24 carries the post-translational modification Pyrrolidone carboxylic acid. 4 disulfides stabilise this stretch: Cys34–Cys109, Cys67–Cys72, Cys115–Cys310, and Cys194–Cys219. The active-site Proton acceptor is His65. Ca(2+)-binding residues include Asp66, Val69, Gly71, Asp73, and Ser75. The N-linked (GlcNAc...) asparagine glycan is linked to Asn148. Substrate is bound at residue Pro157. Residue Asn169 is glycosylated (N-linked (GlcNAc...) asparagine). His187 serves as a coordination point for heme b. Position 188 (Thr188) interacts with Ca(2+). N-linked (GlcNAc...) asparagine glycosylation is present at Asn203. Ca(2+)-binding residues include Asp234, Thr237, and Asp242. 2 N-linked (GlcNAc...) asparagine glycosylation sites follow: Asn274 and Asn309.

Belongs to the peroxidase family. Classical plant (class III) peroxidase subfamily. The cofactor is Ca(2+). Heme b serves as cofactor.

It is found in the secreted. It carries out the reaction 2 a phenolic donor + H2O2 = 2 a phenolic radical donor + 2 H2O. Its function is as follows. Removal of H(2)O(2), oxidation of toxic reductants, biosynthesis and degradation of lignin, suberization, auxin catabolism, response to environmental stresses such as wounding, pathogen attack and oxidative stress. These functions might be dependent on each isozyme/isoform in each plant tissue. This chain is Peroxidase 2 (PRX112), found in Oryza sativa subsp. japonica (Rice).